The primary structure comprises 481 residues: Glutamate--tRNA ligase (481 aa).

Residues P9–T19 carry the 'HIGH' region motif. Residues K247–R251 carry the 'KMSKS' region motif. Position 250 (K250) interacts with ATP.

It belongs to the class-I aminoacyl-tRNA synthetase family. Glutamate--tRNA ligase type 1 subfamily. In terms of assembly, monomer.

The protein localises to the cytoplasm. The catalysed reaction is tRNA(Glu) + L-glutamate + ATP = L-glutamyl-tRNA(Glu) + AMP + diphosphate. Catalyzes the attachment of glutamate to tRNA(Glu) in a two-step reaction: glutamate is first activated by ATP to form Glu-AMP and then transferred to the acceptor end of tRNA(Glu). This Trichormus variabilis (strain ATCC 29413 / PCC 7937) (Anabaena variabilis) protein is Glutamate--tRNA ligase.